A 529-amino-acid polypeptide reads, in one-letter code: Bifunctional purine biosynthesis protein PurH (529 aa).

The region spanning 1–148 (MQQRRPIRRA…KNHKDVAIVV (148 aa)) is the MGS-like domain.

Belongs to the PurH family.

The enzyme catalyses (6R)-10-formyltetrahydrofolate + 5-amino-1-(5-phospho-beta-D-ribosyl)imidazole-4-carboxamide = 5-formamido-1-(5-phospho-D-ribosyl)imidazole-4-carboxamide + (6S)-5,6,7,8-tetrahydrofolate. The catalysed reaction is IMP + H2O = 5-formamido-1-(5-phospho-D-ribosyl)imidazole-4-carboxamide. The protein operates within purine metabolism; IMP biosynthesis via de novo pathway; 5-formamido-1-(5-phospho-D-ribosyl)imidazole-4-carboxamide from 5-amino-1-(5-phospho-D-ribosyl)imidazole-4-carboxamide (10-formyl THF route): step 1/1. Its pathway is purine metabolism; IMP biosynthesis via de novo pathway; IMP from 5-formamido-1-(5-phospho-D-ribosyl)imidazole-4-carboxamide: step 1/1. The chain is Bifunctional purine biosynthesis protein PurH from Yersinia enterocolitica serotype O:8 / biotype 1B (strain NCTC 13174 / 8081).